We begin with the raw amino-acid sequence, 292 residues long: Xanthine dehydrogenase FAD-binding subunit (292 aa).

Residues 1–176 form the FAD-binding PCMH-type domain; sequence MFDFASYHRA…VAFHFPPQPK (176 aa). FAD is bound by residues 27-34, 109-113, Ile165, and Phe184; these read KLLAGGTD and ATYGG.

In terms of assembly, heterotrimer of XdhA, XdhB and XdhC. Requires FAD as cofactor.

It catalyses the reaction xanthine + NAD(+) + H2O = urate + NADH + H(+). The enzyme catalyses hypoxanthine + NAD(+) + H2O = xanthine + NADH + H(+). Its pathway is purine metabolism; hypoxanthine degradation; urate from hypoxanthine: step 1/2. The protein operates within purine metabolism; hypoxanthine degradation; urate from hypoxanthine: step 2/2. Functionally, presumed to be a dehydrogenase, but possibly an oxidase. Participates in limited purine salvage (requires aspartate) but does not support aerobic growth on purines as the sole carbon source (purine catabolism). This is Xanthine dehydrogenase FAD-binding subunit (xdhB) from Escherichia coli O157:H7.